An 85-amino-acid polypeptide reads, in one-letter code: Putative membrane protein insertion efficiency factor (85 aa).

It belongs to the UPF0161 family.

It is found in the cell inner membrane. Could be involved in insertion of integral membrane proteins into the membrane. The protein is Putative membrane protein insertion efficiency factor of Vibrio atlanticus (strain LGP32) (Vibrio splendidus (strain Mel32)).